Here is a 450-residue protein sequence, read N- to C-terminus: DNA primase DnaG (450 aa).

One can recognise a Toprim domain in the interval 199 to 273; it reads DSIIVVEGRA…DVDYVARAPE (75 aa). Mg(2+) is bound by residues Glu205, Asp247, and Asp249. The segment covering 320-348 has biased composition (basic and acidic residues); it reads APSKEVKPAPKHEPKPQPVEQKPREEKII. The segment at 320 to 350 is disordered; the sequence is APSKEVKPAPKHEPKPQPVEQKPREEKIIRP.

Belongs to the archaeal DnaG primase family. Forms a ternary complex with MCM helicase and DNA. Component of the archaeal exosome complex. Requires Mg(2+) as cofactor.

The catalysed reaction is ssDNA + n NTP = ssDNA/pppN(pN)n-1 hybrid + (n-1) diphosphate.. Functionally, RNA polymerase that catalyzes the synthesis of short RNA molecules used as primers for DNA polymerase during DNA replication. Also part of the exosome, which is a complex involved in RNA degradation. Acts as a poly(A)-binding protein that enhances the interaction between heteromeric, adenine-rich transcripts and the exosome. In Thermococcus gammatolerans (strain DSM 15229 / JCM 11827 / EJ3), this protein is DNA primase DnaG.